Consider the following 445-residue polypeptide: Tubulin beta-1 chain (445 aa).

The MREI motif motif lies at 1-4 (MREI). GTP-binding residues include Q11, E69, S138, G142, T143, G144, N204, and N226. Residue E69 coordinates Mg(2+). Positions 425 to 445 (YQDATAEEEGEFEEEGEEELA) are disordered. The span at 429-445 (TAEEEGEFEEEGEEELA) shows a compositional bias: acidic residues. A 5-glutamyl polyglutamate modification is found at E438.

The protein belongs to the tubulin family. In terms of assembly, dimer of alpha and beta chains. A typical microtubule is a hollow water-filled tube with an outer diameter of 25 nm and an inner diameter of 15 nM. Alpha-beta heterodimers associate head-to-tail to form protofilaments running lengthwise along the microtubule wall with the beta-tubulin subunit facing the microtubule plus end conferring a structural polarity. Microtubules usually have 13 protofilaments but different protofilament numbers can be found in some organisms and specialized cells. Mg(2+) serves as cofactor. In terms of processing, some glutamate residues at the C-terminus are polyglycylated, resulting in polyglycine chains on the gamma-carboxyl group. Glycylation is mainly limited to tubulin incorporated into axonemes (cilia and flagella) whereas glutamylation is prevalent in neuronal cells, centrioles, axonemes, and the mitotic spindle. Both modifications can coexist on the same protein on adjacent residues, and lowering polyglycylation levels increases polyglutamylation, and reciprocally. The precise function of polyglycylation is still unclear. Some glutamate residues at the C-terminus are polyglutamylated, resulting in polyglutamate chains on the gamma-carboxyl group. Polyglutamylation plays a key role in microtubule severing by spastin (SPAST). SPAST preferentially recognizes and acts on microtubules decorated with short polyglutamate tails: severing activity by SPAST increases as the number of glutamates per tubulin rises from one to eight, but decreases beyond this glutamylation threshold.

Its subcellular location is the cytoplasm. It is found in the cytoskeleton. In terms of biological role, tubulin is the major constituent of microtubules, a cylinder consisting of laterally associated linear protofilaments composed of alpha- and beta-tubulin heterodimers. Microtubules grow by the addition of GTP-tubulin dimers to the microtubule end, where a stabilizing cap forms. Below the cap, tubulin dimers are in GDP-bound state, owing to GTPase activity of alpha-tubulin. The protein is Tubulin beta-1 chain of Gadus morhua (Atlantic cod).